The following is a 275-amino-acid chain: tRNA pseudouridine synthase A (275 aa).

Asp-56 (nucleophile) is an active-site residue. Tyr-109 contributes to the substrate binding site.

The protein belongs to the tRNA pseudouridine synthase TruA family.

The catalysed reaction is uridine(38/39/40) in tRNA = pseudouridine(38/39/40) in tRNA. Functionally, formation of pseudouridine at positions 38, 39 and 40 in the anticodon stem and loop of transfer RNAs. This Methanothermobacter thermautotrophicus (strain ATCC 29096 / DSM 1053 / JCM 10044 / NBRC 100330 / Delta H) (Methanobacterium thermoautotrophicum) protein is tRNA pseudouridine synthase A.